We begin with the raw amino-acid sequence, 737 residues long: Zinc finger protein 280C (737 aa).

Glycyl lysine isopeptide (Lys-Gly) (interchain with G-Cter in SUMO2) cross-links involve residues K5, K10, K14, K33, and K55. The segment covering 57-66 has biased composition (polar residues); sequence AISNILNRGH. Residues 57–137 are disordered; the sequence is AISNILNRGH…DFTKNSQVGS (81 aa). A Glycyl lysine isopeptide (Lys-Gly) (interchain with G-Cter in SUMO2) cross-link involves residue K75. At S80 the chain carries Phosphoserine. A compositionally biased stretch (polar residues) spans 112 to 123; the sequence is SKSSQSSVTVEN. Residues K113, K126, K167, K174, K180, and K187 each participate in a glycyl lysine isopeptide (Lys-Gly) (interchain with G-Cter in SUMO2) cross-link. The span at 176 to 185 shows a compositional bias: polar residues; it reads PSTSKVNSVT. The disordered stretch occupies residues 176-223; the sequence is PSTSKVNSVTPKKPKTSEDVPQINPSTSLPLIGSPPVTSSQVMLSKGT. Residues 211–223 are compositionally biased toward polar residues; it reads PVTSSQVMLSKGT. Residue T223 is modified to Phosphothreonine. A Phosphoserine modification is found at S227. Residue K273 forms a Glycyl lysine isopeptide (Lys-Gly) (interchain with G-Cter in SUMO2) linkage. 5 C2H2-type zinc fingers span residues 316-338, 353-376, 383-406, 413-436, and 470-492; these read FKCF…MKHH, TTCQ…ESTH, TICK…KDTH, YVCQ…RAAH, and HRCP…KAQH. Residue K522 forms a Glycyl lysine isopeptide (Lys-Gly) (interchain with G-Cter in SUMO2) linkage. Positions 535–579 are enriched in polar residues; that stretch reads SFLQVTPPTSQNTTARNPRKSNASRSKTSKLHATTSTASKVNTSK. A disordered region spans residues 535–602; it reads SFLQVTPPTS…YKQKRQRNRK (68 aa). Residue T540 is modified to Phosphothreonine. Residues K564 and K574 each participate in a glycyl lysine isopeptide (Lys-Gly) (interchain with G-Cter in SUMO2) cross-link. Positions 580–602 are enriched in basic residues; it reads PRGRIAKSKAKPSYKQKRQRNRK.

The protein localises to the nucleus. In terms of biological role, may function as a transcription factor. The sequence is that of Zinc finger protein 280C (ZNF280C) from Homo sapiens (Human).